The chain runs to 525 residues: RNA-directed RNA polymerase (525 aa).

In terms of domain architecture, RdRp catalytic spans Leu-72–Ala-272.

Interacts with VP3 in the cytoplasm. In terms of processing, may exist in multiple phosphorylated forms.

It is found in the virion. The enzyme catalyses RNA(n) + a ribonucleoside 5'-triphosphate = RNA(n+1) + diphosphate. Its function is as follows. RNA-dependent RNA polymerase which is found both free and covalently attached to the genomic RNA. May also contain guanylyl and methyl transferase activities. The polypeptide is RNA-directed RNA polymerase (VP1) (Gallus gallus (Chicken)).